An 87-amino-acid chain; its full sequence is Phosphoribosyl-ATP pyrophosphatase (87 aa).

Belongs to the PRA-PH family.

It is found in the cytoplasm. The enzyme catalyses 1-(5-phospho-beta-D-ribosyl)-ATP + H2O = 1-(5-phospho-beta-D-ribosyl)-5'-AMP + diphosphate + H(+). Its pathway is amino-acid biosynthesis; L-histidine biosynthesis; L-histidine from 5-phospho-alpha-D-ribose 1-diphosphate: step 2/9. This chain is Phosphoribosyl-ATP pyrophosphatase, found in Nocardia farcinica (strain IFM 10152).